Consider the following 260-residue polypeptide: Phosphatidylglycerol--prolipoprotein diacylglyceryl transferase (260 aa).

The next 4 helical transmembrane spans lie at 17–37 (VVKWYGIMMALGVVALVSWIF), 52–72 (LTAAIIAIPSGIVFAKLLHVI), 85–105 (IFSGEGLTIFGAIIGATIGLW), and 113–133 (FNLGYLLDVAVPGILLGQAIG). An a 1,2-diacyl-sn-glycero-3-phospho-(1'-sn-glycerol)-binding site is contributed by Arg134. 3 helical membrane-spanning segments follow: residues 170–190 (APTQAYEIIFLLCLLTFSLFI), 198–218 (GQLFLLYISLYAAWRVAIGFV), and 227–247 (GLEQAQVVGLILMAVAVPLFI).

It belongs to the Lgt family.

The protein localises to the cell membrane. It carries out the reaction L-cysteinyl-[prolipoprotein] + a 1,2-diacyl-sn-glycero-3-phospho-(1'-sn-glycerol) = an S-1,2-diacyl-sn-glyceryl-L-cysteinyl-[prolipoprotein] + sn-glycerol 1-phosphate + H(+). It functions in the pathway protein modification; lipoprotein biosynthesis (diacylglyceryl transfer). In terms of biological role, catalyzes the transfer of the diacylglyceryl group from phosphatidylglycerol to the sulfhydryl group of the N-terminal cysteine of a prolipoprotein, the first step in the formation of mature lipoproteins. In Dehalococcoides mccartyi (strain ATCC BAA-2100 / JCM 16839 / KCTC 5957 / BAV1), this protein is Phosphatidylglycerol--prolipoprotein diacylglyceryl transferase.